A 131-amino-acid polypeptide reads, in one-letter code: Small ribosomal subunit protein bS6 (131 aa).

Positions 99–131 (ASPMVKAKDERRERREDFATETNEDSDAGDSEE) are disordered. A compositionally biased stretch (basic and acidic residues) spans 104–116 (KAKDERRERREDF). A compositionally biased stretch (acidic residues) spans 120–131 (TNEDSDAGDSEE).

It belongs to the bacterial ribosomal protein bS6 family.

Functionally, binds together with bS18 to 16S ribosomal RNA. The sequence is that of Small ribosomal subunit protein bS6 from Sodalis glossinidius (strain morsitans).